A 126-amino-acid chain; its full sequence is Large ribosomal subunit protein bL17 (126 aa).

Belongs to the bacterial ribosomal protein bL17 family. Part of the 50S ribosomal subunit. Contacts protein L32.

This Rickettsia felis (strain ATCC VR-1525 / URRWXCal2) (Rickettsia azadi) protein is Large ribosomal subunit protein bL17.